We begin with the raw amino-acid sequence, 404 residues long: Argininosuccinate synthase (404 aa).

ATP is bound by residues 12-20 (AYSGGLDTS) and Ala-39. L-citrulline is bound by residues Tyr-91 and Ser-96. Residue Gly-121 coordinates ATP. L-aspartate is bound by residues Thr-123, Asn-127, and Asp-128. Asn-127 is a binding site for L-citrulline. The L-citrulline site is built by Arg-131, Ser-180, Ser-189, Glu-265, and Tyr-277.

It belongs to the argininosuccinate synthase family. Type 1 subfamily. As to quaternary structure, homotetramer.

Its subcellular location is the cytoplasm. It catalyses the reaction L-citrulline + L-aspartate + ATP = 2-(N(omega)-L-arginino)succinate + AMP + diphosphate + H(+). The protein operates within amino-acid biosynthesis; L-arginine biosynthesis; L-arginine from L-ornithine and carbamoyl phosphate: step 2/3. This is Argininosuccinate synthase from Vibrio cholerae serotype O1 (strain ATCC 39541 / Classical Ogawa 395 / O395).